Reading from the N-terminus, the 226-residue chain is Urease accessory protein UreF (226 aa).

This sequence belongs to the UreF family. As to quaternary structure, ureD, UreF and UreG form a complex that acts as a GTP-hydrolysis-dependent molecular chaperone, activating the urease apoprotein by helping to assemble the nickel containing metallocenter of UreC. The UreE protein probably delivers the nickel.

It localises to the cytoplasm. Functionally, required for maturation of urease via the functional incorporation of the urease nickel metallocenter. This is Urease accessory protein UreF from Burkholderia ambifaria (strain ATCC BAA-244 / DSM 16087 / CCUG 44356 / LMG 19182 / AMMD) (Burkholderia cepacia (strain AMMD)).